The chain runs to 598 residues: Probable translation initiation factor IF-2 (598 aa).

Residues 3–225 enclose the tr-type G domain; that stretch reads LRCPIVSVLG…GLAQRFLEQK (223 aa). The G1 stretch occupies residues 12 to 19; that stretch reads GHVDHGKT. 12–19 serves as a coordination point for GTP; it reads GHVDHGKT. The G2 stretch occupies residues 37–41; sequence GITQH. The tract at residues 76 to 79 is G3; the sequence is DTPG. GTP is bound by residues 76-80 and 130-133; these read DTPGH and NKVD. The tract at residues 130 to 133 is G4; sequence NKVD. The G5 stretch occupies residues 200-202; sequence SAM.

Belongs to the TRAFAC class translation factor GTPase superfamily. Classic translation factor GTPase family. IF-2 subfamily.

Functionally, function in general translation initiation by promoting the binding of the formylmethionine-tRNA to ribosomes. Seems to function along with eIF-2. This Methanococcus maripaludis (strain DSM 14266 / JCM 13030 / NBRC 101832 / S2 / LL) protein is Probable translation initiation factor IF-2.